Consider the following 606-residue polypeptide: Elongation factor 4 (606 aa).

A tr-type G domain is found at 7 to 189; that stretch reads SRIRNFCIIA…AVVDRVPPPK (183 aa). GTP contacts are provided by residues 19–24 and 136–139; these read DHGKST and NKID.

The protein belongs to the TRAFAC class translation factor GTPase superfamily. Classic translation factor GTPase family. LepA subfamily.

It is found in the cell inner membrane. The catalysed reaction is GTP + H2O = GDP + phosphate + H(+). In terms of biological role, required for accurate and efficient protein synthesis under certain stress conditions. May act as a fidelity factor of the translation reaction, by catalyzing a one-codon backward translocation of tRNAs on improperly translocated ribosomes. Back-translocation proceeds from a post-translocation (POST) complex to a pre-translocation (PRE) complex, thus giving elongation factor G a second chance to translocate the tRNAs correctly. Binds to ribosomes in a GTP-dependent manner. The chain is Elongation factor 4 from Synechococcus sp. (strain CC9605).